The chain runs to 238 residues: Phosphoribosylaminoimidazole-succinocarboxamide synthase (238 aa).

Belongs to the SAICAR synthetase family.

It catalyses the reaction 5-amino-1-(5-phospho-D-ribosyl)imidazole-4-carboxylate + L-aspartate + ATP = (2S)-2-[5-amino-1-(5-phospho-beta-D-ribosyl)imidazole-4-carboxamido]succinate + ADP + phosphate + 2 H(+). Its pathway is purine metabolism; IMP biosynthesis via de novo pathway; 5-amino-1-(5-phospho-D-ribosyl)imidazole-4-carboxamide from 5-amino-1-(5-phospho-D-ribosyl)imidazole-4-carboxylate: step 1/2. The polypeptide is Phosphoribosylaminoimidazole-succinocarboxamide synthase (Desulfitobacterium hafniense (strain DSM 10664 / DCB-2)).